Reading from the N-terminus, the 61-residue chain is Small ribosomal subunit protein uS14B (61 aa).

The Zn(2+) site is built by cysteine 24, cysteine 27, cysteine 40, and cysteine 43.

The protein belongs to the universal ribosomal protein uS14 family. Zinc-binding uS14 subfamily. As to quaternary structure, part of the 30S ribosomal subunit. Contacts proteins S3 and S10. It depends on Zn(2+) as a cofactor.

Functionally, binds 16S rRNA, required for the assembly of 30S particles and may also be responsible for determining the conformation of the 16S rRNA at the A site. The chain is Small ribosomal subunit protein uS14B from Mycobacteroides abscessus (strain ATCC 19977 / DSM 44196 / CCUG 20993 / CIP 104536 / JCM 13569 / NCTC 13031 / TMC 1543 / L948) (Mycobacterium abscessus).